The following is a 391-amino-acid chain: Putative neutrophil cytosol factor 1B (391 aa).

A PX domain is found at 1 to 126; sequence MGDTFIRHIA…DFFKVRPDDL (126 aa). 2 consecutive SH3 domains span residues 157 to 216 and 227 to 286; these read IILQ…PLDS and YAGE…KSGQ. The interval 286 to 391 is disordered; the sequence is QDVSQAQRQI…STKRKLASAV (106 aa). Serine 304 and serine 305 each carry phosphoserine. Residues 310–319 show a composition bias toward basic residues; it reads HSIHQRSRKR. Phosphoserine is present on residues serine 321, serine 329, serine 346, and serine 349.

It is found in the cytoplasm. Its function is as follows. May be required for activation of the latent NADPH oxidase (necessary for superoxide production). This is Putative neutrophil cytosol factor 1B (NCF1B) from Homo sapiens (Human).